The primary structure comprises 163 residues: Phosphopantetheine adenylyltransferase (163 aa).

A substrate-binding site is contributed by Thr10. Residues 10-11 and His18 each bind ATP; that span reads TF. Positions 42, 74, and 88 each coordinate substrate. ATP is bound by residues 89 to 91, Glu99, and 124 to 130; these read GLR and NSFISST.

The protein belongs to the bacterial CoaD family. In terms of assembly, homohexamer. Requires Mg(2+) as cofactor.

It localises to the cytoplasm. It carries out the reaction (R)-4'-phosphopantetheine + ATP + H(+) = 3'-dephospho-CoA + diphosphate. Its pathway is cofactor biosynthesis; coenzyme A biosynthesis; CoA from (R)-pantothenate: step 4/5. Its function is as follows. Reversibly transfers an adenylyl group from ATP to 4'-phosphopantetheine, yielding dephospho-CoA (dPCoA) and pyrophosphate. In Shewanella sp. (strain MR-4), this protein is Phosphopantetheine adenylyltransferase.